A 300-amino-acid polypeptide reads, in one-letter code: Protein YIF1B-B (300 aa).

The segment at 1–46 (MNQESSFRAPPKRRVRGSNPNISNPHQLFDDTSGGPVPHGGDFPNH) is disordered. Topologically, residues 1–142 (MNQESSFRAP…APRFDINAPD (142 aa)) are cytoplasmic. Residues 143 to 163 (LYIPVMAFITYILVAGLALGT) form a helical membrane-spanning segment. Residues 164–178 (QSRFSPEILGMQASS) are Extracellular-facing. The chain crosses the membrane as a helical span at residues 179-199 (ALAWLIVEVLAILLSLYLVTV). Residues 200–205 (NTDLTT) lie on the Cytoplasmic side of the membrane. Residues 206 to 226 (VDLVAFSGYKYVGMISGVIAG) form a helical membrane-spanning segment. Residue leucine 227 is a topological domain, extracellular. A helical membrane pass occupies residues 228 to 248 (LFGNTGYYVVLAWCCISIVFF). Residues 249-278 (MIRTLRLKILSEAAAEGVLVRGARNQLRMY) lie on the Cytoplasmic side of the membrane. Residues 279-299 (LTMAIAAVQPIFMYWLTYHLV) form a helical membrane-spanning segment. Residue arginine 300 is a topological domain, extracellular.

Belongs to the YIF1 family.

The protein resides in the endoplasmic reticulum membrane. Its subcellular location is the golgi apparatus membrane. It localises to the endoplasmic reticulum-Golgi intermediate compartment membrane. Its function is as follows. Functions in endoplasmic reticulum to Golgi vesicle-mediated transport and regulates the proper organization of the endoplasmic reticulum and the Golgi. Plays a key role in targeting to neuronal dendrites receptors such as HTR1A. Plays also a role in primary cilium and sperm flagellum assembly probably through protein transport to these compartments. The protein is Protein YIF1B-B (yif1b-b) of Xenopus laevis (African clawed frog).